The following is a 249-amino-acid chain: Small ribosomal subunit protein uS3 (249 aa).

In terms of domain architecture, KH type-2 spans Ile-39 to Val-109. Positions Lys-226–Ser-239 are enriched in basic and acidic residues. The disordered stretch occupies residues Lys-226 to Arg-249. Residues Arg-240 to Arg-249 are compositionally biased toward basic residues.

Belongs to the universal ribosomal protein uS3 family. In terms of assembly, part of the 30S ribosomal subunit. Forms a tight complex with proteins S10 and S14.

Its function is as follows. Binds the lower part of the 30S subunit head. Binds mRNA in the 70S ribosome, positioning it for translation. In Pelodictyon phaeoclathratiforme (strain DSM 5477 / BU-1), this protein is Small ribosomal subunit protein uS3.